Here is a 119-residue protein sequence, read N- to C-terminus: Protein TusC (119 aa).

Belongs to the DsrF/TusC family. As to quaternary structure, heterohexamer, formed by a dimer of trimers. The hexameric TusBCD complex contains 2 copies each of TusB, TusC and TusD. The TusBCD complex interacts with TusE.

The protein localises to the cytoplasm. Its function is as follows. Part of a sulfur-relay system required for 2-thiolation of 5-methylaminomethyl-2-thiouridine (mnm(5)s(2)U) at tRNA wobble positions. This chain is Protein TusC, found in Escherichia coli O45:K1 (strain S88 / ExPEC).